The primary structure comprises 66 residues: Large ribosomal subunit protein bL35 (66 aa).

The protein belongs to the bacterial ribosomal protein bL35 family.

This Ruegeria pomeroyi (strain ATCC 700808 / DSM 15171 / DSS-3) (Silicibacter pomeroyi) protein is Large ribosomal subunit protein bL35.